We begin with the raw amino-acid sequence, 87 residues long: Protein WFDC11 (87 aa).

An N-terminal signal peptide occupies residues Met-1–Gly-25.

The protein localises to the secreted. This is Protein WFDC11 (WFDC11) from Homo sapiens (Human).